Here is a 257-residue protein sequence, read N- to C-terminus: Aspartate/glutamate leucyltransferase (257 aa).

The protein belongs to the R-transferase family. Bpt subfamily.

It is found in the cytoplasm. It catalyses the reaction N-terminal L-glutamyl-[protein] + L-leucyl-tRNA(Leu) = N-terminal L-leucyl-L-glutamyl-[protein] + tRNA(Leu) + H(+). The enzyme catalyses N-terminal L-aspartyl-[protein] + L-leucyl-tRNA(Leu) = N-terminal L-leucyl-L-aspartyl-[protein] + tRNA(Leu) + H(+). Functionally, functions in the N-end rule pathway of protein degradation where it conjugates Leu from its aminoacyl-tRNA to the N-termini of proteins containing an N-terminal aspartate or glutamate. The sequence is that of Aspartate/glutamate leucyltransferase from Leptospira interrogans serogroup Icterohaemorrhagiae serovar copenhageni (strain Fiocruz L1-130).